We begin with the raw amino-acid sequence, 110 residues long: uncharacterized protein (110 aa).

An N-terminal signal peptide occupies residues 1–23 (MKRITINIITMFIAAAVISLTGT).

This is an uncharacterized protein from Bacillus subtilis (strain 168).